The primary structure comprises 970 residues: Sodium/calcium exchanger 1 (970 aa).

A signal peptide spans 1 to 32; the sequence is MLQFSLSPTLSMGFHVIAMVALLFSHVDHISA. Over 33–71 the chain is Extracellular; the sequence is ETEMEGEGNETGECTGSYYCKKGVILPIWEPQDPSFGDK. A glycan (N-linked (GlcNAc...) asparagine) is linked at asparagine 41. The chain crosses the membrane as a helical span at residues 72–92; it reads IARATVYFVAMVYMFLGVSII. The Cytoplasmic portion of the chain corresponds to 93–133; it reads ADRFMSSIEVITSQEKEITIKKPNGETTKTTVRIWNETVSN. A helical transmembrane segment spans residues 134–154; it reads LTLMALGSSAPEILLSVIEVC. The Alpha-1 repeat unit spans residues 138–178; sequence ALGSSAPEILLSVIEVCGHNFTAGDLGPSTIVGSAAFNMFI. At 155-167 the chain is on the extracellular side; that stretch reads GHNFTAGDLGPST. Asparagine 157 carries an N-linked (GlcNAc...) asparagine glycan. The chain crosses the membrane as a helical span at residues 168 to 188; sequence IVGSAAFNMFIIIALCVYVVP. At 189–201 the chain is on the cytoplasmic side; that stretch reads DGETRKIKHLRVF. The helical transmembrane segment at 202–222 threads the bilayer; that stretch reads FVTAAWSIFAYTWLYIILSVS. The Extracellular portion of the chain corresponds to 223–228; sequence SPGVVE. Residues 229–249 traverse the membrane as a helical segment; sequence VWEGLLTFFFFPICVVFAWVA. Topologically, residues 250–797 are cytoplasmic; it reads DRRLLFYKYV…FVPPTEYWNG (548 aa). The interval 251–270 is putative calmodulin-binding region; sequence RRLLFYKYVYKRYRAGKQRG. Serine 282 and serine 389 each carry phosphoserine. Calx-beta domains lie at 393-493 and 524-624; these read VNTE…VHLS and ATVT…LEIG. Ca(2+) is bound by residues glutamate 417, aspartate 453, aspartate 478, aspartate 479, isoleucine 481, glutamate 483, glutamate 486, aspartate 530, aspartate 531, aspartate 532, glutamate 548, aspartate 584, aspartate 610, glutamate 611, glutamate 612, and glutamate 715. Residues 798–818 form a helical membrane-spanning segment; that stretch reads WACFIVSILMIGLLTAFIGDL. Residues 819-821 lie on the Extracellular side of the membrane; sequence ASH. The helical transmembrane segment at 822–842 threads the bilayer; sequence FACTIALKDSVTAVVFVALGT. One copy of the Alpha-2 repeat lies at 839–875; the sequence is ALGTSVPDTFASKVAATQDQYADASIGNVTGSNAVNV. Topologically, residues 843 to 871 are cytoplasmic; the sequence is SVPDTFASKVAATQDQYADASIGNVTGSN. The helical transmembrane segment at 872-892 threads the bilayer; that stretch reads AVNVFLGIGVAWSIAAIYHAA. The Extracellular portion of the chain corresponds to 893–903; it reads NGEQFKVSPGT. Residues 904–924 traverse the membrane as a helical segment; it reads LAFSVTLFTIFAFINVGVLLY. Residues 925–941 lie on the Cytoplasmic side of the membrane; it reads RRRPEIGGELGGPRTAK. A helical membrane pass occupies residues 942–962; sequence LLTSCLFVLLWLLYIFFSSLE. At 963–970 the chain is on the extracellular side; it reads AYCHIKGF.

This sequence belongs to the Ca(2+):cation antiporter (CaCA) (TC 2.A.19) family. SLC8 subfamily.

Its subcellular location is the cell membrane. The catalysed reaction is Ca(2+)(in) + 3 Na(+)(out) = Ca(2+)(out) + 3 Na(+)(in). Its activity is regulated as follows. Activated by micromolar levels of Ca(2+). In terms of biological role, mediates the exchange of one Ca(2+) ion against three to four Na(+) ions across the cell membrane, and thereby contributes to the regulation of cytoplasmic Ca(2+) levels and Ca(2+)-dependent cellular processes. Contributes to Ca(2+) transport during excitation-contraction coupling in muscle. In a first phase, voltage-gated channels mediate the rapid increase of cytoplasmic Ca(2+) levels due to release of Ca(2+) stores from the endoplasmic reticulum. SLC8A1 mediates the export of Ca(2+) from the cell during the next phase, so that cytoplasmic Ca(2+) levels rapidly return to baseline. Required for normal embryonic heart development and the onset of heart contractions. In Bos taurus (Bovine), this protein is Sodium/calcium exchanger 1 (SLC8A1).